We begin with the raw amino-acid sequence, 287 residues long: tRNA (guanine(9)-N1)-methyltransferase (287 aa).

The interval 1–27 is disordered; that stretch reads MSDTSDLVDGKWQRLPPVPEGMSKSQW. Residues 79 to 272 enclose the SAM-dependent MTase TRM10-type domain; the sequence is EPRVNRDQVA…SVIPSRKLDP (194 aa). Residues 179 to 180, glycine 199, 203 to 207, cysteine 211, leucine 225, and 237 to 239 contribute to the S-adenosyl-L-methionine site; these read LT, DKNRH, and KVL. The Proton acceptor role is filled by aspartate 203. Basic and acidic residues predominate over residues 268–278; that stretch reads RKLDPVKEKEQ. Residues 268-287 form a disordered region; sequence RKLDPVKEKEQQQQQQQQQQ.

Belongs to the class IV-like SAM-binding methyltransferase superfamily. TRM10 family. As to quaternary structure, monomer.

Its subcellular location is the cytoplasm. The protein resides in the nucleus. It catalyses the reaction guanosine(9) in tRNA + S-adenosyl-L-methionine = N(1)-methylguanosine(9) in tRNA + S-adenosyl-L-homocysteine + H(+). Its function is as follows. S-adenosyl-L-methionine-dependent guanine N(1)-methyltransferase that catalyzes the formation of N(1)-methylguanine at position 9 (m1G9) in cytoplasmic tRNA. The polypeptide is tRNA (guanine(9)-N1)-methyltransferase (Candida glabrata (strain ATCC 2001 / BCRC 20586 / JCM 3761 / NBRC 0622 / NRRL Y-65 / CBS 138) (Yeast)).